A 246-amino-acid polypeptide reads, in one-letter code: Endonuclease NucS (246 aa).

The protein belongs to the NucS endonuclease family.

The protein localises to the cytoplasm. Its function is as follows. Cleaves both 3' and 5' ssDNA extremities of branched DNA structures. The sequence is that of Endonuclease NucS from Corynebacterium urealyticum (strain ATCC 43042 / DSM 7109).